Consider the following 146-residue polypeptide: Small ribosomal subunit protein bS6 (146 aa).

The disordered stretch occupies residues Q106–K146. Residues A113–R124 are compositionally biased toward basic and acidic residues. Residues N125–K146 show a composition bias toward low complexity.

The protein belongs to the bacterial ribosomal protein bS6 family.

Binds together with bS18 to 16S ribosomal RNA. In Oenococcus oeni (strain ATCC BAA-331 / PSU-1), this protein is Small ribosomal subunit protein bS6.